Consider the following 271-residue polypeptide: ATP synthase subunit a (271 aa).

5 helical membrane passes run 38–58, 100–120, 146–166, 211–231, and 242–262; these read FWTLNIDSMFFSVVLGLLFLA, VIAPLALTVFVWVFLMNLMDL, DVNITLSMALGVFILIIFYSI, LFGNMYAGELIFILIAGLLPW, and AIFHILIITLQAFIFMVLTIV.

This sequence belongs to the ATPase A chain family. F-type ATPases have 2 components, CF(1) - the catalytic core - and CF(0) - the membrane proton channel. CF(1) has five subunits: alpha(3), beta(3), gamma(1), delta(1), epsilon(1). CF(0) has three main subunits: a(1), b(2) and c(9-12). The alpha and beta chains form an alternating ring which encloses part of the gamma chain. CF(1) is attached to CF(0) by a central stalk formed by the gamma and epsilon chains, while a peripheral stalk is formed by the delta and b chains.

Its subcellular location is the cell inner membrane. Its function is as follows. Key component of the proton channel; it plays a direct role in the translocation of protons across the membrane. The chain is ATP synthase subunit a from Klebsiella pneumoniae (strain 342).